The chain runs to 64 residues: Beta-defensin 5 (64 aa).

The N-terminal stretch at 1–22 (MRLHHLLLVLLFLVLSAGSGFT) is a signal peptide. At glutamine 23 the chain carries Pyrrolidone carboxylic acid. Disulfide bonds link cysteine 31-cysteine 60, cysteine 38-cysteine 53, and cysteine 43-cysteine 61.

Belongs to the beta-defensin family. In terms of tissue distribution, neutrophilic granules. Alveolar macrophages.

The protein resides in the secreted. Functionally, has bactericidal activity. Active against E.coli ML35 but not against S.aureus 502A. The protein is Beta-defensin 5 (DEFB5) of Bos taurus (Bovine).